A 175-amino-acid chain; its full sequence is Large ribosomal subunit protein uL30 (175 aa).

The protein belongs to the universal ribosomal protein uL30 family. As to quaternary structure, part of the 50S ribosomal subunit.

In Pyrobaculum neutrophilum (strain DSM 2338 / JCM 9278 / NBRC 100436 / V24Sta) (Thermoproteus neutrophilus), this protein is Large ribosomal subunit protein uL30.